The primary structure comprises 345 residues: Sulfate/thiosulfate import ATP-binding protein CysA (345 aa).

Residues 3–237 (IQVSGLCKHF…PRTEFVYQFV (235 aa)) form the ABC transporter domain. 35–42 (GPSGCGKT) contributes to the ATP binding site.

Belongs to the ABC transporter superfamily. Sulfate/tungstate importer (TC 3.A.1.6) family. In terms of assembly, the complex is composed of two ATP-binding proteins (CysA), two transmembrane proteins (CysT and CysW) and a solute-binding protein (CysP).

It localises to the cell inner membrane. The catalysed reaction is sulfate(out) + ATP + H2O = sulfate(in) + ADP + phosphate + H(+). It catalyses the reaction thiosulfate(out) + ATP + H2O = thiosulfate(in) + ADP + phosphate + H(+). Part of the ABC transporter complex CysAWTP involved in sulfate/thiosulfate import. Responsible for energy coupling to the transport system. This Vibrio vulnificus (strain CMCP6) protein is Sulfate/thiosulfate import ATP-binding protein CysA.